Here is a 254-residue protein sequence, read N- to C-terminus: Probable derlin-2 homolog (254 aa).

The Cytoplasmic segment spans residues M1–K17. Residues I18–L38 traverse the membrane as a helical segment. At R39–D95 the chain is on the lumenal side. Residues Y96 to Y116 traverse the membrane as a helical segment. The Cytoplasmic portion of the chain corresponds to T117–K118. The chain crosses the membrane as a helical span at residues I119–S139. Residues R140–H146 lie on the Lumenal side of the membrane. A helical transmembrane segment spans residues I147–M167. Residues G168–Q254 are Cytoplasmic-facing.

Belongs to the derlin family.

It localises to the endoplasmic reticulum membrane. Functionally, may be involved in the degradation process of specific misfolded endoplasmic reticulum (ER) luminal proteins. May also be involved in endoplasmic reticulum stress-induced pre-emptive quality control, a mechanism that selectively attenuates the translocation of newly synthesized proteins into the endoplasmic reticulum and reroutes them to the cytosol for proteasomal degradation. The chain is Probable derlin-2 homolog (derl2) from Dictyostelium discoideum (Social amoeba).